The sequence spans 286 residues: Phosphate import ATP-binding protein PstB (286 aa).

Residues 40 to 281 (IAVRNLDFYY…PREQRTQEYI (242 aa)) enclose the ABC transporter domain. Residue 72 to 79 (GPSGCGKS) participates in ATP binding.

It belongs to the ABC transporter superfamily. Phosphate importer (TC 3.A.1.7) family. As to quaternary structure, the complex is composed of two ATP-binding proteins (PstB), two transmembrane proteins (PstC and PstA) and a solute-binding protein (PstS).

It is found in the cell inner membrane. It catalyses the reaction phosphate(out) + ATP + H2O = ADP + 2 phosphate(in) + H(+). Its function is as follows. Part of the ABC transporter complex PstSACB involved in phosphate import. Responsible for energy coupling to the transport system. The sequence is that of Phosphate import ATP-binding protein PstB from Granulibacter bethesdensis (strain ATCC BAA-1260 / CGDNIH1).